The chain runs to 122 residues: Small ribosomal subunit protein uS13 (122 aa).

Residues 95-122 (GLPVHGQRTKTNARTRKGPARTVAGKKK) are disordered.

The protein belongs to the universal ribosomal protein uS13 family. As to quaternary structure, part of the 30S ribosomal subunit. Forms a loose heterodimer with protein S19. Forms two bridges to the 50S subunit in the 70S ribosome.

Functionally, located at the top of the head of the 30S subunit, it contacts several helices of the 16S rRNA. In the 70S ribosome it contacts the 23S rRNA (bridge B1a) and protein L5 of the 50S subunit (bridge B1b), connecting the 2 subunits; these bridges are implicated in subunit movement. Contacts the tRNAs in the A and P-sites. The polypeptide is Small ribosomal subunit protein uS13 (Geotalea uraniireducens (strain Rf4) (Geobacter uraniireducens)).